The chain runs to 339 residues: Anthranilate phosphoribosyltransferase (339 aa).

5-phospho-alpha-D-ribose 1-diphosphate is bound by residues glycine 79, 82–83, serine 87, 89–92, 107–115, and serine 119; these read GD, NIST, and KHGNRSISS. Glycine 79 serves as a coordination point for anthranilate. A Mg(2+)-binding site is contributed by serine 91. Asparagine 110 contacts anthranilate. Residue arginine 165 participates in anthranilate binding. Residues aspartate 224 and glutamate 225 each coordinate Mg(2+).

The protein belongs to the anthranilate phosphoribosyltransferase family. As to quaternary structure, homodimer. Mg(2+) serves as cofactor.

The enzyme catalyses N-(5-phospho-beta-D-ribosyl)anthranilate + diphosphate = 5-phospho-alpha-D-ribose 1-diphosphate + anthranilate. The protein operates within amino-acid biosynthesis; L-tryptophan biosynthesis; L-tryptophan from chorismate: step 2/5. In terms of biological role, catalyzes the transfer of the phosphoribosyl group of 5-phosphorylribose-1-pyrophosphate (PRPP) to anthranilate to yield N-(5'-phosphoribosyl)-anthranilate (PRA). This chain is Anthranilate phosphoribosyltransferase, found in Listeria welshimeri serovar 6b (strain ATCC 35897 / DSM 20650 / CCUG 15529 / CIP 8149 / NCTC 11857 / SLCC 5334 / V8).